We begin with the raw amino-acid sequence, 38 residues long: Large ribosomal subunit protein bL36 (38 aa).

Belongs to the bacterial ribosomal protein bL36 family.

The polypeptide is Large ribosomal subunit protein bL36 (Chlorobium phaeobacteroides (strain BS1)).